The primary structure comprises 475 residues: Glucose-6-phosphate 1-dehydrogenase gcd1 (475 aa).

2 residues coordinate NADP(+): Arg42 and Lys146. Residues Lys146, Glu214, and Asp233 each coordinate D-glucose 6-phosphate. His238 (proton acceptor) is an active-site residue. Lys332 provides a ligand contact to D-glucose 6-phosphate. The NADP(+) site is built by Arg342 and Arg365.

Belongs to the glucose-6-phosphate dehydrogenase family.

It is found in the cytoplasm. The catalysed reaction is D-glucose 6-phosphate + NADP(+) = 6-phospho-D-glucono-1,5-lactone + NADPH + H(+). It functions in the pathway carbohydrate degradation; pentose phosphate pathway; D-ribulose 5-phosphate from D-glucose 6-phosphate (oxidative stage): step 1/3. Functionally, catalyzes the rate-limiting step of the oxidative pentose-phosphate pathway, which represents a route for the dissimilation of carbohydrates besides glycolysis. The main function of this enzyme is to provide reducing power (NADPH) and pentose phosphates for fatty acid and nucleic acid synthesis. The protein is Glucose-6-phosphate 1-dehydrogenase gcd1 of Schizosaccharomyces pombe (strain 972 / ATCC 24843) (Fission yeast).